Consider the following 62-residue polypeptide: DNA-directed RNA polymerase subunit Rpo10 (62 aa).

Zn(2+) contacts are provided by cysteine 6, cysteine 9, cysteine 43, and cysteine 44.

This sequence belongs to the archaeal Rpo10/eukaryotic RPB10 RNA polymerase subunit family. In terms of assembly, part of the RNA polymerase complex. Zn(2+) is required as a cofactor.

Its subcellular location is the cytoplasm. The catalysed reaction is RNA(n) + a ribonucleoside 5'-triphosphate = RNA(n+1) + diphosphate. Its function is as follows. DNA-dependent RNA polymerase (RNAP) catalyzes the transcription of DNA into RNA using the four ribonucleoside triphosphates as substrates. The sequence is that of DNA-directed RNA polymerase subunit Rpo10 from Methanocorpusculum labreanum (strain ATCC 43576 / DSM 4855 / Z).